A 145-amino-acid polypeptide reads, in one-letter code: Transmembrane protein 216 (145 aa).

4 helical membrane-spanning segments follow: residues 22-42 (ILFFLNGWYNATYFLLELFIF), 56-76 (LVLDVVMLLLYLGIEVIRLFF), 89-109 (LSISVALTFPSAMMASYYLLL), and 122-142 (GILLFFCGSELLLEVLTLAAF).

In terms of assembly, part of the tectonic-like complex (also named B9 complex). Interacts with TMEM107.

It is found in the membrane. The protein resides in the cytoplasm. Its subcellular location is the cytoskeleton. The protein localises to the cilium basal body. Part of the tectonic-like complex which is required for tissue-specific ciliogenesis and may regulate ciliary membrane composition. The chain is Transmembrane protein 216 (TMEM216) from Homo sapiens (Human).